The following is a 367-amino-acid chain: tRNA/tmRNA (uracil-C(5))-methyltransferase (367 aa).

5 residues coordinate S-adenosyl-L-methionine: Gln-190, Tyr-218, Asn-223, Glu-239, and Asp-299. The active-site Nucleophile is the Cys-324. Glu-358 serves as the catalytic Proton acceptor.

This sequence belongs to the class I-like SAM-binding methyltransferase superfamily. RNA M5U methyltransferase family. TrmA subfamily.

The catalysed reaction is uridine(54) in tRNA + S-adenosyl-L-methionine = 5-methyluridine(54) in tRNA + S-adenosyl-L-homocysteine + H(+). The enzyme catalyses uridine(341) in tmRNA + S-adenosyl-L-methionine = 5-methyluridine(341) in tmRNA + S-adenosyl-L-homocysteine + H(+). Its function is as follows. Dual-specificity methyltransferase that catalyzes the formation of 5-methyluridine at position 54 (m5U54) in all tRNAs, and that of position 341 (m5U341) in tmRNA (transfer-mRNA). In Erwinia tasmaniensis (strain DSM 17950 / CFBP 7177 / CIP 109463 / NCPPB 4357 / Et1/99), this protein is tRNA/tmRNA (uracil-C(5))-methyltransferase.